Reading from the N-terminus, the 474-residue chain is Chromosomal replication initiator protein DnaA (474 aa).

Positions 1-91 (MSEELWQRCL…STRASTPAAS (91 aa)) are domain I, interacts with DnaA modulators. The disordered stretch occupies residues 89 to 138 (AASYFNGSSSSSSNGPITTPAAAPAPRQPESDSRPQPTSLGGARKHRSNL). The tract at residues 91–136 (SYFNGSSSSSSNGPITTPAAAPAPRQPESDSRPQPTSLGGARKHRS) is domain II. Over residues 96–113 (SSSSSSNGPITTPAAAPA) the composition is skewed to low complexity. The tract at residues 137 to 354 (NLNTGFTFST…GALRRVIAHV (218 aa)) is domain III, AAA+ region. The ATP site is built by glycine 182, glycine 184, lysine 185, and threonine 186. Residues 355–474 (RFTGAQIDIG…YLNLLRTLTS (120 aa)) form a domain IV, binds dsDNA region.

The protein belongs to the DnaA family. Oligomerizes as a right-handed, spiral filament on DNA at oriC.

Its subcellular location is the cytoplasm. Its function is as follows. Plays an essential role in the initiation and regulation of chromosomal replication. ATP-DnaA binds to the origin of replication (oriC) to initiate formation of the DNA replication initiation complex once per cell cycle. Binds the DnaA box (a 9 base pair repeat at the origin) and separates the double-stranded (ds)DNA. Forms a right-handed helical filament on oriC DNA; dsDNA binds to the exterior of the filament while single-stranded (ss)DNA is stabiized in the filament's interior. The ATP-DnaA-oriC complex binds and stabilizes one strand of the AT-rich DNA unwinding element (DUE), permitting loading of DNA polymerase. After initiation quickly degrades to an ADP-DnaA complex that is not apt for DNA replication. Binds acidic phospholipids. The sequence is that of Chromosomal replication initiator protein DnaA from Alcanivorax borkumensis (strain ATCC 700651 / DSM 11573 / NCIMB 13689 / SK2).